A 474-amino-acid polypeptide reads, in one-letter code: Probable periplasmic serine endoprotease DegP-like (474 aa).

Positions 1-25 (MRNLKSVTPLLMAALLWGQSLLAQA) are cleaved as a signal peptide. Catalysis depends on charge relay system residues His-113, Asp-143, and Ser-216. Substrate-binding positions include 214–216 (GNS) and 271–275 (LGVVI). PDZ domains are found at residues 260-351 (LKAD…VRDG) and 357-463 (KVTI…LRQG).

The protein belongs to the peptidase S1C family.

Its subcellular location is the periplasm. The enzyme catalyses Acts on substrates that are at least partially unfolded. The cleavage site P1 residue is normally between a pair of hydrophobic residues, such as Val-|-Val.. Might be efficient in the degradation of transiently denatured and unfolded proteins which accumulate in the periplasm following stress conditions. The protein is Probable periplasmic serine endoprotease DegP-like of Ectopseudomonas mendocina (strain ymp) (Pseudomonas mendocina).